A 472-amino-acid polypeptide reads, in one-letter code: Carboxypeptidase Q (472 aa).

An N-terminal signal peptide occupies residues 1–20 (MKFLLFMFVGVVHLLPLASG). Positions 21–44 (KAIYGNGPSQRTFQEIKEEIAHYG) are excised as a propeptide. Residues Asn-52, Asn-61, and Asn-179 are each glycosylated (N-linked (GlcNAc...) asparagine). Zn(2+) contacts are provided by His-290 and Asp-302. The active-site Nucleophile is Glu-336. Zn(2+) is bound at residue Glu-337. 2 N-linked (GlcNAc...) asparagine glycosylation sites follow: Asn-353 and Asn-356. Asp-364 provides a ligand contact to Zn(2+). N-linked (GlcNAc...) asparagine glycosylation occurs at Asn-396. His-434 contacts Zn(2+).

This sequence belongs to the peptidase M28 family. As to quaternary structure, homodimer. The monomeric form is inactive while the homodimer is active. Post-translationally, N-glycosylated. The secreted form is modified by hybrid or complex type oligosaccharide chains.

The protein resides in the endoplasmic reticulum. It is found in the golgi apparatus. Its subcellular location is the lysosome. The protein localises to the secreted. In terms of biological role, carboxypeptidase that may play an important role in the hydrolysis of circulating peptides. Catalyzes the hydrolysis of dipeptides with unsubstituted terminals into amino acids. May play a role in the liberation of thyroxine hormone from its thyroglobulin (Tg) precursor. The chain is Carboxypeptidase Q (CPQ) from Bos taurus (Bovine).